The following is a 158-amino-acid chain: Transcriptional repressor NrdR (158 aa).

Residues 1 to 22 form a disordered region; the sequence is MRCPFCGSDDTQVKDSRPAEDN. Residues 3-34 fold into a zinc finger; the sequence is CPFCGSDDTQVKDSRPAEDNSAIRRRRICPDC. The span at 11–22 shows a compositional bias: basic and acidic residues; that stretch reads TQVKDSRPAEDN. The ATP-cone domain occupies 49–139; it reads LTVLKKTGRK…VYRDFSHAED (91 aa).

Belongs to the NrdR family. Zn(2+) serves as cofactor.

Its function is as follows. Negatively regulates transcription of bacterial ribonucleotide reductase nrd genes and operons by binding to NrdR-boxes. The chain is Transcriptional repressor NrdR from Allorhizobium ampelinum (strain ATCC BAA-846 / DSM 112012 / S4) (Agrobacterium vitis (strain S4)).